The sequence spans 445 residues: Putative ubiquitin carboxyl-terminal hydrolase L293 (445 aa).

The USP domain occupies 133-441 (KALANFGNSC…SAYIILYGDI (309 aa)). The active-site Nucleophile is the cysteine 142. The active-site Proton acceptor is the histidine 384.

It belongs to the peptidase C19 family.

It localises to the virion. The enzyme catalyses Thiol-dependent hydrolysis of ester, thioester, amide, peptide and isopeptide bonds formed by the C-terminal Gly of ubiquitin (a 76-residue protein attached to proteins as an intracellular targeting signal).. The chain is Putative ubiquitin carboxyl-terminal hydrolase L293 from Acanthamoeba polyphaga mimivirus (APMV).